A 107-amino-acid chain; its full sequence is Phosphoribosyl-ATP pyrophosphatase (107 aa).

The protein belongs to the PRA-PH family.

Its subcellular location is the cytoplasm. The enzyme catalyses 1-(5-phospho-beta-D-ribosyl)-ATP + H2O = 1-(5-phospho-beta-D-ribosyl)-5'-AMP + diphosphate + H(+). It participates in amino-acid biosynthesis; L-histidine biosynthesis; L-histidine from 5-phospho-alpha-D-ribose 1-diphosphate: step 2/9. This Bacillus cereus (strain Q1) protein is Phosphoribosyl-ATP pyrophosphatase.